A 202-amino-acid chain; its full sequence is Protein DCV1 (202 aa).

The N-terminal stretch at 1-18 is a signal peptide; it reads MLNYKLILLFSSFLQLIS. Helical transmembrane passes span 91 to 107, 137 to 155, and 168 to 189; these read IGGLLISIPVATCLTFI, ILTLLSTIFACTVILLLCM, and LVWLANCSLFPLLVIGVHFLSF.

Its subcellular location is the membrane. The protein is Protein DCV1 (DCV1) of Saccharomyces cerevisiae (strain ATCC 204508 / S288c) (Baker's yeast).